Reading from the N-terminus, the 507-residue chain is Dihydrolipoyl dehydrogenase 2, mitochondrial (507 aa).

Residues 1 to 36 (MAMASLARRKAYFLTRNISNSPTDAFRFSFSLTRGF) constitute a mitochondrion transit peptide. Residues 73–82 (EKRGALGGTC), Lys-91, Gly-155, and 184–186 (TGS) each bind FAD. Cys-82 and Cys-87 form a disulfide bridge. Residues 221-228 (GAGYIGLE), Glu-244, Val-278, and Gly-313 contribute to the NAD(+) site. FAD-binding positions include Asp-354 and 360–363 (MLAH). His-486 serves as the catalytic Proton acceptor.

The protein belongs to the class-I pyridine nucleotide-disulfide oxidoreductase family. As to quaternary structure, homodimer. Part of both the glycine cleavage system composed of four proteins: P, T, L and H and of the pyruvate dehydrogenase complex containing multiple copies of three enzymatic components: pyruvate dehydrogenase (E1), dihydrolipoamide acetyltransferase (E2) and lipoamide dehydrogenase (E3). FAD serves as cofactor. In terms of processing, S-nytrosylated at unknown positions. In terms of tissue distribution, preferentially expressed in roots, flowers and siliques and at a lower level in stems and leaves.

Its subcellular location is the mitochondrion matrix. The catalysed reaction is N(6)-[(R)-dihydrolipoyl]-L-lysyl-[protein] + NAD(+) = N(6)-[(R)-lipoyl]-L-lysyl-[protein] + NADH + H(+). Functionally, lipoamide dehydrogenase is a component of the glycine decarboxylase (GDC) or glycine cleavage system as well as of the alpha-ketoacid dehydrogenase complexes. LPD1 is probably the protein most often associated with the glycine decarboxylase complex while LPD2 is probably incorporated into alpha-ketoacid dehydrogenase complexes. The chain is Dihydrolipoyl dehydrogenase 2, mitochondrial (LPD2) from Arabidopsis thaliana (Mouse-ear cress).